A 188-amino-acid polypeptide reads, in one-letter code: PRA1 family protein 3 (188 aa).

An N-acetylmethionine modification is found at Met-1. Residues 1–35 are Cytoplasmic-facing; it reads MDVNIAPLRAWDDFFPGSDRFAQPDFRDISKWNNR. 2 helical membrane passes run 36–56 and 57–77; these read VVSNLLYYQTNYLVVAAMMIS and VVGFLSPFNMILGGIVVVLVF. Over 78–93 the chain is Cytoplasmic; it reads TGFVWAAHNKDALRRL. A run of 2 helical transmembrane segments spans residues 94–114 and 115–135; these read KKRYPTTFVMVVMLASYFLIS and MFGGVMVFVFGITFPLLLMFI. The interval 103-117 is required for homodimer formation and heterodimer formation with ARL6IP1; the sequence is MVVMLASYFLISMFG. Topologically, residues 136 to 188 are cytoplasmic; the sequence is HASLRLRNLKNKLENKMEGIGLKRTPMGIVLDALEQQEEGINRLTDYISKVKE. The tract at residues 136–188 is targeting to endoplasmic reticulum membrane; that stretch reads HASLRLRNLKNKLENKMEGIGLKRTPMGIVLDALEQQEEGINRLTDYISKVKE.

Belongs to the PRA1 family. As to quaternary structure, homodimer. Heterodimer with ARL6IP1. Forms multimers. Interacts with ARL6. Interacts with prenylated RAB1A and RAB3A. Interacts with SLC1A1/EAAC1. Interacts with RTN2 (via first transmembrane domain). Does not interact with VAMP1, VAMP2 or VAMP3.

It localises to the endoplasmic reticulum membrane. The protein resides in the cell membrane. Its subcellular location is the cytoplasm. It is found in the cytoskeleton. In terms of biological role, regulates intracellular concentrations of taurine and glutamate. Negatively modulates SLC1A1/EAAC1 glutamate transport activity by decreasing its affinity for glutamate in a PKC activity-dependent manner. Plays a role in the retention of SLC1A1/EAAC1 in the endoplasmic reticulum. The chain is PRA1 family protein 3 (ARL6IP5) from Macaca fascicularis (Crab-eating macaque).